The chain runs to 256 residues: EF-hand calcium-binding domain-containing protein 4A (256 aa).

The span at 1-10 (MAHLGSRRRM) shows a compositional bias: basic residues. The tract at residues 1 to 32 (MAHLGSRRRMSPGLRTRIAHRKAHRTPPSPLI) is disordered. EF-hand domains are found at residues 41–69 (KAHE…QNEL) and 71–106 (LTPE…LLGV). Ca(2+) is bound by residues aspartate 84, serine 86, asparagine 88, tyrosine 90, and glutamate 95. A coiled-coil region spans residues 190 to 235 (IRDVHHEKDTLEQALKRKETDHGREVRCLYEEMEQQIKIERERLLK).

The protein belongs to the EFCAB4 family.

The sequence is that of EF-hand calcium-binding domain-containing protein 4A (cracr2b) from Xenopus tropicalis (Western clawed frog).